The chain runs to 250 residues: uncharacterized protein (250 aa).

A divalent metal cation-binding residues include glutamate 97, glutamate 99, and aspartate 128.

This sequence belongs to the FAH family.

This is an uncharacterized protein from Archaeoglobus fulgidus (strain ATCC 49558 / DSM 4304 / JCM 9628 / NBRC 100126 / VC-16).